Here is a 275-residue protein sequence, read N- to C-terminus: Trypsin-4 (275 aa).

The N-terminal stretch at 1-18 (MSNKITILLAVLLAVVAC) is a signal peptide. A propeptide spans 19–48 (AQAHASHQRRVPYPLPRFLPRPHHTVSNHR) (activation peptide). Positions 49 to 274 (IVGGFEIDVA…VRDWIRETCG (226 aa)) constitute a Peptidase S1 domain. Cys74 and Cys90 are disulfide-bonded. Catalysis depends on charge relay system residues His89 and Asp134. 2 disulfides stabilise this stretch: Cys199–Cys215 and Cys226–Cys250. The active-site Charge relay system is the Ser230.

It belongs to the peptidase S1 family. In terms of tissue distribution, expressed in the midgut. Expression levels drop a few hours after blood feeding and pick up again 28 hours later.

The protein localises to the secreted. The catalysed reaction is Preferential cleavage: Arg-|-Xaa, Lys-|-Xaa.. Its function is as follows. Constitutive trypsin that is expressed 2 days after emergence, coinciding with host seeking behavior of the female. In Anopheles gambiae (African malaria mosquito), this protein is Trypsin-4 (TRYP4).